Consider the following 874-residue polypeptide: Chaperone protein ClpB 1 (874 aa).

One can recognise a Clp R domain in the interval 6 to 148; that stretch reads PNQFTEKAWE…RQIIQQIRGS (143 aa). 2 repeat regions span residues 9-73 and 85-148; these read FTEK…IARQ and LGRS…IRGS. Residues 161-342 form an NBD1 region; the sequence is EALEKYGRDL…RRFQQVFVDQ (182 aa). Residue 208–215 coordinates ATP; it reads GEPGVGKT. The tract at residues 343-551 is linker; that stretch reads PTVEDTISIL…IAEIISKWTG (209 aa). The stretch at 393–527 forms a coiled coil; it reads IDLVDESAAR…MEGGLATTHT (135 aa). The segment at 561-772 is NBD2; the sequence is EMQKLLNLDE…RVDETIIFHS (212 aa). An ATP-binding site is contributed by 611 to 618; it reads GPTGVGKT. Positions 773 to 874 are C-terminal; it reads LRKDQLQQIV…IATPTAVPLS (102 aa).

The protein belongs to the ClpA/ClpB family. As to quaternary structure, homohexamer. The oligomerization is ATP-dependent.

The protein localises to the cytoplasm. Part of a stress-induced multi-chaperone system, it is involved in the recovery of the cell from heat-induced damage, in cooperation with DnaK, DnaJ and GrpE. Acts before DnaK, in the processing of protein aggregates. Protein binding stimulates the ATPase activity; ATP hydrolysis unfolds the denatured protein aggregates, which probably helps expose new hydrophobic binding sites on the surface of ClpB-bound aggregates, contributing to the solubilization and refolding of denatured protein aggregates by DnaK. Necessary for thermotolerance. This Synechococcus elongatus (strain ATCC 33912 / PCC 7942 / FACHB-805) (Anacystis nidulans R2) protein is Chaperone protein ClpB 1 (clpB1).